The sequence spans 207 residues: Ribosomal RNA small subunit methyltransferase G (207 aa).

Residues glycine 77, phenylalanine 82, 100-102 (ERS), and arginine 141 each bind S-adenosyl-L-methionine.

Belongs to the methyltransferase superfamily. RNA methyltransferase RsmG family.

Its subcellular location is the cytoplasm. Specifically methylates the N7 position of a guanine in 16S rRNA. This is Ribosomal RNA small subunit methyltransferase G from Borrelia turicatae (strain 91E135).